The chain runs to 371 residues: Cytochrome b (371 aa).

A run of 4 helical transmembrane segments spans residues 25–45 (FGSMLLTCSALQVMTGFFLSM), 69–90 (WMMQNLHAIGASMFFICIYMHI), 105–125 (WLSGTTLLIMLMATAFFGYVL), and 170–190 (FFALHFILPFGIISMSSVHIM). 2 residues coordinate heme b: His-75 and His-89. Residues His-174 and His-188 each coordinate heme b. His-193 provides a ligand contact to a ubiquinone. A run of 4 helical transmembrane segments spans residues 218-238 (YKDLLVISMMIITVLLTVSFF), 280-300 (LGGALALVMSIMILLTMPFTH), 312-332 (LMQFMFWTLVATFTVITWTAT), and 339-358 (FTTISQVASIIYFMFFMSNP).

It belongs to the cytochrome b family. In terms of assembly, the cytochrome bc1 complex contains 3 respiratory subunits (MT-CYB, CYC1 and UQCRFS1), 2 core proteins (UQCRC1 and UQCRC2) and probably 6 low-molecular weight proteins. Heme b serves as cofactor.

It is found in the mitochondrion inner membrane. In terms of biological role, component of the ubiquinol-cytochrome c reductase complex (complex III or cytochrome b-c1 complex) that is part of the mitochondrial respiratory chain. The b-c1 complex mediates electron transfer from ubiquinol to cytochrome c. Contributes to the generation of a proton gradient across the mitochondrial membrane that is then used for ATP synthesis. The sequence is that of Cytochrome b (MT-CYB) from Candoia carinata (Papuan tree boa).